The primary structure comprises 459 residues: Cell division protein FtsZ (459 aa).

GTP is bound by residues glycine 25 to asparagine 29, glycine 112 to glycine 114, glutamate 143, arginine 147, and aspartate 191. 2 disordered regions span residues aspartate 383 to glutamate 405 and isoleucine 427 to aspartate 459.

The protein belongs to the FtsZ family. In terms of assembly, homodimer. Polymerizes to form a dynamic ring structure in a strictly GTP-dependent manner. Interacts directly with several other division proteins.

It localises to the cytoplasm. Essential cell division protein that forms a contractile ring structure (Z ring) at the future cell division site. The regulation of the ring assembly controls the timing and the location of cell division. One of the functions of the FtsZ ring is to recruit other cell division proteins to the septum to produce a new cell wall between the dividing cells. Binds GTP and shows GTPase activity. The protein is Cell division protein FtsZ of Rickettsia bellii (strain RML369-C).